The following is a 73-amino-acid chain: Translation initiation factor IF-1 (73 aa).

The 73-residue stretch at 1–73 (MAKKDGAIEV…SRGRIVYRYK (73 aa)) folds into the S1-like domain.

This sequence belongs to the IF-1 family. As to quaternary structure, component of the 30S ribosomal translation pre-initiation complex which assembles on the 30S ribosome in the order IF-2 and IF-3, IF-1 and N-formylmethionyl-tRNA(fMet); mRNA recruitment can occur at any time during PIC assembly.

It is found in the cytoplasm. Functionally, one of the essential components for the initiation of protein synthesis. Stabilizes the binding of IF-2 and IF-3 on the 30S subunit to which N-formylmethionyl-tRNA(fMet) subsequently binds. Helps modulate mRNA selection, yielding the 30S pre-initiation complex (PIC). Upon addition of the 50S ribosomal subunit IF-1, IF-2 and IF-3 are released leaving the mature 70S translation initiation complex. The chain is Translation initiation factor IF-1 from Mycobacterium avium (strain 104).